Reading from the N-terminus, the 251-residue chain is MSEDTSNSTHFGYKTIEAEKKADLVAGVFHSVAAKYDIMNDVMSFGIHRMWKRFTIESAGARPGMKVLDLAGGTGDLTAKFSRIIGDTGQVTLADINDSMLKVGREKLRDKGIVGNVNYVQANAEALPFPDNHFDIITIAFGLRNVTDKDAAIASMLRVLKPGGKLLVLEFSKPQHDIMRKVYDLYSFKVLPKMGSLITKDADSYEYLAESIRMHPDQDTLKQMMEDAGFEQVNYTNMTDGIVALHKGYKF.

Residues T74, D95, and 123 to 124 contribute to the S-adenosyl-L-methionine site; that span reads NA.

The protein belongs to the class I-like SAM-binding methyltransferase superfamily. MenG/UbiE family.

The catalysed reaction is a 2-demethylmenaquinol + S-adenosyl-L-methionine = a menaquinol + S-adenosyl-L-homocysteine + H(+). It catalyses the reaction a 2-methoxy-6-(all-trans-polyprenyl)benzene-1,4-diol + S-adenosyl-L-methionine = a 5-methoxy-2-methyl-3-(all-trans-polyprenyl)benzene-1,4-diol + S-adenosyl-L-homocysteine + H(+). It functions in the pathway quinol/quinone metabolism; menaquinone biosynthesis; menaquinol from 1,4-dihydroxy-2-naphthoate: step 2/2. Its pathway is cofactor biosynthesis; ubiquinone biosynthesis. Functionally, methyltransferase required for the conversion of demethylmenaquinol (DMKH2) to menaquinol (MKH2) and the conversion of 2-polyprenyl-6-methoxy-1,4-benzoquinol (DDMQH2) to 2-polyprenyl-3-methyl-6-methoxy-1,4-benzoquinol (DMQH2). The polypeptide is Ubiquinone/menaquinone biosynthesis C-methyltransferase UbiE (Shewanella halifaxensis (strain HAW-EB4)).